The chain runs to 725 residues: N-alpha-acetyltransferase 35, NatC auxiliary subunit (725 aa).

Serine 187 is modified (phosphoserine). The interval 548–573 (ERIMEEQQKGRSSKKTKKKKKVRPLS) is disordered. Basic residues predominate over residues 558–571 (RSSKKTKKKKKVRP).

It belongs to the MAK10 family. In terms of assembly, component of the N-terminal acetyltransferase C (NatC) complex, which is composed of NAA35, NAA38 and NAA30.

It localises to the cytoplasm. In terms of biological role, auxillary component of the N-terminal acetyltransferase C (NatC) complex which catalyzes acetylation of N-terminal methionine residues. N-terminal acetylation protects proteins from ubiquitination and degradation by the N-end rule pathway. Involved in regulation of apoptosis and proliferation of smooth muscle cells. This is N-alpha-acetyltransferase 35, NatC auxiliary subunit (NAA35) from Macaca fascicularis (Crab-eating macaque).